A 284-amino-acid polypeptide reads, in one-letter code: Protoheme IX farnesyltransferase (284 aa).

Transmembrane regions (helical) follow at residues 13-33 (VTVL…TGYP), 35-55 (LTVI…SFIL), 84-104 (FALL…TYFI), 106-126 (LLTA…YTIW), 134-154 (NIVI…AAMA), 163-183 (VMFL…AIFL), 205-225 (VNQI…FYFV), 229-249 (MGYL…GFAY), and 264-284 (FFFS…DSKI).

It belongs to the UbiA prenyltransferase family. Protoheme IX farnesyltransferase subfamily.

It localises to the cell inner membrane. The enzyme catalyses heme b + (2E,6E)-farnesyl diphosphate + H2O = Fe(II)-heme o + diphosphate. Its pathway is porphyrin-containing compound metabolism; heme O biosynthesis; heme O from protoheme: step 1/1. Converts heme B (protoheme IX) to heme O by substitution of the vinyl group on carbon 2 of heme B porphyrin ring with a hydroxyethyl farnesyl side group. The polypeptide is Protoheme IX farnesyltransferase (Leptospira biflexa serovar Patoc (strain Patoc 1 / Ames)).